We begin with the raw amino-acid sequence, 100 residues long: MTTATTLGDAVFSLNMTRGEDILYKSSGAIVAAIVVVVVIIVTLVLILLKMYNRRMRTRRELEPKSPKPPVPPALDPNSNGSQQPAAVTSDPADVPVETR.

The Extracellular portion of the chain corresponds to 1-28 (MTTATTLGDAVFSLNMTRGEDILYKSSG). The chain crosses the membrane as a helical span at residues 29 to 49 (AIVAAIVVVVVIIVTLVLILL). The Cytoplasmic segment spans residues 50 to 100 (KMYNRRMRTRRELEPKSPKPPVPPALDPNSNGSQQPAAVTSDPADVPVETR). Residues 58-100 (TRRELEPKSPKPPVPPALDPNSNGSQQPAAVTSDPADVPVETR) form a disordered region. The span at 77 to 87 (PNSNGSQQPAA) shows a compositional bias: polar residues.

In terms of processing, glycosylated. In terms of tissue distribution, expressed in the peripheral nervous system Schwann cells (at protein level).

The protein localises to the cell membrane. In terms of biological role, plays a role in myelin formation. The sequence is that of Noncompact myelin-associated protein (Ncmap) from Rattus norvegicus (Rat).